A 96-amino-acid polypeptide reads, in one-letter code: Putative toxin Y4kP (96 aa).

Belongs to the RelE toxin family.

Functionally, toxic component of a type II toxin-antitoxin (TA) system. The protein is Putative toxin Y4kP of Sinorhizobium fredii (strain NBRC 101917 / NGR234).